The chain runs to 142 residues: ATP synthase epsilon chain (142 aa).

It belongs to the ATPase epsilon chain family. In terms of assembly, F-type ATPases have 2 components, CF(1) - the catalytic core - and CF(0) - the membrane proton channel. CF(1) has five subunits: alpha(3), beta(3), gamma(1), delta(1), epsilon(1). CF(0) has three main subunits: a, b and c.

The protein resides in the cell inner membrane. Produces ATP from ADP in the presence of a proton gradient across the membrane. This Shewanella denitrificans (strain OS217 / ATCC BAA-1090 / DSM 15013) protein is ATP synthase epsilon chain.